Here is a 313-residue protein sequence, read N- to C-terminus: Coproporphyrin III ferrochelatase (313 aa).

Positions 191 and 270 each coordinate Fe(2+).

This sequence belongs to the ferrochelatase family.

Its subcellular location is the cytoplasm. The enzyme catalyses Fe-coproporphyrin III + 2 H(+) = coproporphyrin III + Fe(2+). It participates in porphyrin-containing compound metabolism; protoheme biosynthesis. Involved in coproporphyrin-dependent heme b biosynthesis. Catalyzes the insertion of ferrous iron into coproporphyrin III to form Fe-coproporphyrin III. The polypeptide is Coproporphyrin III ferrochelatase (Enterococcus faecalis (strain ATCC 700802 / V583)).